Reading from the N-terminus, the 555-residue chain is 6-phosphofructo-2-kinase/fructose-2,6-bisphosphatase 3 (555 aa).

The segment at 1–245 (MPLELTQSRV…VYYLMNIHVQ (245 aa)) is 6-phosphofructo-2-kinase. 42-50 (GLPARGKTY) lines the ATP pocket. Positions 75 and 99 each coordinate beta-D-fructose 6-phosphate. The active site involves Asp125. Positions 127 and 133 each coordinate beta-D-fructose 6-phosphate. Residue Cys155 is part of the active site. Position 164–169 (164–169 (NIMEVK)) interacts with ATP. Residues Lys169, Arg190, and Tyr194 each contribute to the beta-D-fructose 6-phosphate site. The segment at 246–555 (PRTIYLCRHG…CHIFSKFSPY (310 aa)) is fructose-2,6-bisphosphatase. Arg253 is a binding site for beta-D-fructose 2,6-bisphosphate. His254 acts as the Tele-phosphohistidine intermediate in catalysis. Residues Asn260 and Gly266 each contribute to the beta-D-fructose 2,6-bisphosphate site. The Proton donor/acceptor role is filled by Glu323. Residues Tyr334, Arg348, Lys352, Tyr363, Gln389, and Arg393 each coordinate beta-D-fructose 2,6-bisphosphate. 345-348 (YALR) is a binding site for ATP. ATP-binding positions include 389 to 393 (QAVLR) and Tyr425. Positions 475–504 (KQDAKKGPNPLMRRNSVTPLASPEPTKKPR) are disordered. Ser490 carries the post-translational modification Phosphoserine; by AMPK and PKA. Thr492 bears the Phosphothreonine mark. The residue at position 496 (Ser496) is a Phosphoserine.

In the C-terminal section; belongs to the phosphoglycerate mutase family. Homodimer. Forms a heterodimer with PFKFB2. Phosphorylation by AMPK stimulates activity.

It carries out the reaction beta-D-fructose 2,6-bisphosphate + H2O = beta-D-fructose 6-phosphate + phosphate. It catalyses the reaction beta-D-fructose 6-phosphate + ATP = beta-D-fructose 2,6-bisphosphate + ADP + H(+). Its function is as follows. Catalyzes both the synthesis and degradation of fructose 2,6-bisphosphate. This Rattus norvegicus (Rat) protein is 6-phosphofructo-2-kinase/fructose-2,6-bisphosphatase 3 (Pfkfb3).